The primary structure comprises 143 residues: 3-hydroxyacyl-[acyl-carrier-protein] dehydratase FabZ (143 aa).

H48 is a catalytic residue.

It belongs to the thioester dehydratase family. FabZ subfamily.

It is found in the cytoplasm. It carries out the reaction a (3R)-hydroxyacyl-[ACP] = a (2E)-enoyl-[ACP] + H2O. In terms of biological role, involved in unsaturated fatty acids biosynthesis. Catalyzes the dehydration of short chain beta-hydroxyacyl-ACPs and long chain saturated and unsaturated beta-hydroxyacyl-ACPs. This is 3-hydroxyacyl-[acyl-carrier-protein] dehydratase FabZ from Roseiflexus castenholzii (strain DSM 13941 / HLO8).